The primary structure comprises 243 residues: Juxtaposed with another zinc finger protein 1 (243 aa).

The C2H2-type 1 zinc-finger motif lies at 12 to 37 (NTCRFGGCGLHFPTLADLIEHIEDNH). Positions 39-79 (DTDPRVLEKQELQQPTYVALSYINRFMTDAARREQESLKKK) are required for interaction with NR2C2. Over residues 89–108 (SSSVSRGNVSTPPRHSSGSL) the composition is skewed to polar residues. The segment at 89–151 (SSSVSRGNVS…SDSDESWTTE (63 aa)) is disordered. A phosphothreonine mark is found at Thr109 and Thr113. A compositionally biased stretch (low complexity) spans 118–130 (PSSSFRSSTPTGS). Residues 131–148 (EYDEEEVDYEESDSDESW) show a composition bias toward acidic residues. The segment at 173–198 (FACPVPGCKKRYKNVNGIKYHAKNGH) adopts a C2H2-type 2 zinc-finger fold. The C2H2-type 3; degenerate zinc-finger motif lies at 208 to 230 (FKCRCGKSYKTAQGLRHHTINFH).

Interacts with NR2C2 (via ligand-binding region). As to expression, expressed in range of tissues with highest expression levels in testis, liver, muscle and fat and lowest levels in kidney. Detected in liver and white adipose tissue (at protein level).

Its subcellular location is the nucleus. Acts as a transcriptional corepressor of orphan nuclear receptor NR2C2. Inhibits expression of the gluconeogenesis enzyme PCK2 through inhibition of NR2C2 activity. Also involved in transcriptional activation of NAMPT by promoting expression of PPARA and PPARD. Plays a role in lipid metabolism by suppressing lipogenesis, increasing lipolysis and decreasing lipid accumulation in adipose tissue. Plays a role in glucose homeostasis by improving glucose metabolism and insulin sensitivity. This Mus musculus (Mouse) protein is Juxtaposed with another zinc finger protein 1 (Jazf1).